The sequence spans 92 residues: Small ribosomal subunit protein uS19c (92 aa).

Belongs to the universal ribosomal protein uS19 family.

Its subcellular location is the plastid. It is found in the chloroplast. In terms of biological role, protein S19 forms a complex with S13 that binds strongly to the 16S ribosomal RNA. This chain is Small ribosomal subunit protein uS19c, found in Cucumis sativus (Cucumber).